The following is a 230-amino-acid chain: Ribonuclease 3 (230 aa).

The 130-residue stretch at N5–G134 folds into the RNase III domain. A Mg(2+)-binding site is contributed by E47. Residue D51 is part of the active site. N120 and E123 together coordinate Mg(2+). E123 is an active-site residue. Residues D159–K228 enclose the DRBM domain.

Belongs to the ribonuclease III family. In terms of assembly, homodimer. Requires Mg(2+) as cofactor.

It is found in the cytoplasm. It carries out the reaction Endonucleolytic cleavage to 5'-phosphomonoester.. In terms of biological role, digests double-stranded RNA. Involved in the processing of primary rRNA transcript to yield the immediate precursors to the large and small rRNAs (23S and 16S). Processes some mRNAs, and tRNAs when they are encoded in the rRNA operon. Processes pre-crRNA and tracrRNA of type II CRISPR loci if present in the organism. This Wolbachia pipientis subsp. Culex pipiens (strain wPip) protein is Ribonuclease 3.